The following is a 105-amino-acid chain: Iron-sulfur cluster assembly protein CyaY (105 aa).

Belongs to the frataxin family.

Its function is as follows. Involved in iron-sulfur (Fe-S) cluster assembly. May act as a regulator of Fe-S biogenesis. This chain is Iron-sulfur cluster assembly protein CyaY, found in Paraburkholderia phytofirmans (strain DSM 17436 / LMG 22146 / PsJN) (Burkholderia phytofirmans).